Here is a 459-residue protein sequence, read N- to C-terminus: Glutathione reductase (459 aa).

S14, G15, E34, T41, C42, K50, and A114 together coordinate FAD. S14 lines the glutathione pocket. An intrachain disulfide couples C42 to C47. NADP(+) is bound by residues I177, E180, R197, K203, and G262. D313 and T321 together coordinate FAD. Glutathione is bound at residue R329. A351 contacts NADP(+). H448 is a binding site for FAD. H448 functions as the Proton acceptor in the catalytic mechanism.

Belongs to the class-I pyridine nucleotide-disulfide oxidoreductase family. In terms of assembly, homodimer. FAD is required as a cofactor.

The protein localises to the cytoplasm. The catalysed reaction is 2 glutathione + NADP(+) = glutathione disulfide + NADPH + H(+). In terms of biological role, catalyzes the reduction of glutathione disulfide (GSSG) to reduced glutathione (GSH). Constitutes the major mechanism to maintain a high GSH:GSSG ratio in the cytosol. This is Glutathione reductase (gor) from Nostoc sp. (strain PCC 7120 / SAG 25.82 / UTEX 2576).